The following is a 141-amino-acid chain: Galactose-6-phosphate isomerase subunit LacA (141 aa).

It belongs to the LacAB/RpiB family. Heteromultimeric protein consisting of LacA and LacB.

It catalyses the reaction aldehydo-D-galactose 6-phosphate = keto-D-tagatose 6-phosphate. Its pathway is carbohydrate metabolism; D-galactose 6-phosphate degradation; D-tagatose 6-phosphate from D-galactose 6-phosphate: step 1/1. The polypeptide is Galactose-6-phosphate isomerase subunit LacA (Streptococcus equi subsp. zooepidemicus (strain MGCS10565)).